A 359-amino-acid chain; its full sequence is Histidinol-phosphate aminotransferase (359 aa).

Position 217 is an N6-(pyridoxal phosphate)lysine (lysine 217).

Belongs to the class-II pyridoxal-phosphate-dependent aminotransferase family. Histidinol-phosphate aminotransferase subfamily. In terms of assembly, homodimer. Pyridoxal 5'-phosphate is required as a cofactor.

The enzyme catalyses L-histidinol phosphate + 2-oxoglutarate = 3-(imidazol-4-yl)-2-oxopropyl phosphate + L-glutamate. The protein operates within amino-acid biosynthesis; L-histidine biosynthesis; L-histidine from 5-phospho-alpha-D-ribose 1-diphosphate: step 7/9. In Salmonella typhi, this protein is Histidinol-phosphate aminotransferase.